The chain runs to 684 residues: Beta-mannosyltransferase 1 (684 aa).

Over 1 to 28 (MDKFIQSFSHQYLDSSSSLKLTARRKRK) the chain is Cytoplasmic. The helical transmembrane segment at 29–49 (LTILGLFLFSLISLMIIISYS) threads the bilayer. Residues 50 to 684 (NNNILPGLSG…KFCKIYGETF (635 aa)) lie on the Extracellular side of the membrane. Asparagine 297 is a glycosylation site (N-linked (GlcNAc...) asparagine).

Belongs to the BMT family.

The protein localises to the membrane. Functionally, beta-mannosyltransferase involved in cell wall biosynthesis. Required for addition of the first beta-mannose residue to acid-stable fraction of cell wall phosphopeptidomannan. Plays a key role in reducing host inflammatory response. In Candida albicans (strain SC5314 / ATCC MYA-2876) (Yeast), this protein is Beta-mannosyltransferase 1 (BMT1).